The primary structure comprises 70 residues: Putative antitoxin VapB34 (70 aa).

Its function is as follows. Antitoxin component of a possible type II toxin-antitoxin (TA) system. The cognate toxin is VapC34. The sequence is that of Putative antitoxin VapB34 (vapB34) from Mycobacterium tuberculosis (strain CDC 1551 / Oshkosh).